Reading from the N-terminus, the 805-residue chain is Phenylalanine--tRNA ligase beta subunit (805 aa).

The 110-residue stretch at 39–148 folds into the tRNA-binding domain; it reads APPFTGVVVA…AALRPGTDIR (110 aa). Residues 399–474 enclose the B5 domain; the sequence is PVREPVRMRL…RVYGFERIPD (76 aa). Residues D452, D458, E461, and E462 each contribute to the Mg(2+) site. The FDX-ACB domain maps to 703–804; it reads SRQPAVVRDL…LVAAHNARQR (102 aa).

This sequence belongs to the phenylalanyl-tRNA synthetase beta subunit family. Type 1 subfamily. As to quaternary structure, tetramer of two alpha and two beta subunits. Requires Mg(2+) as cofactor.

It is found in the cytoplasm. It catalyses the reaction tRNA(Phe) + L-phenylalanine + ATP = L-phenylalanyl-tRNA(Phe) + AMP + diphosphate + H(+). This Bordetella parapertussis (strain 12822 / ATCC BAA-587 / NCTC 13253) protein is Phenylalanine--tRNA ligase beta subunit.